A 45-amino-acid chain; its full sequence is Iota-conotoxin-like R11.10 (45 aa).

4 cysteine pairs are disulfide-bonded: Cys5/Cys19, Cys12/Cys22, Cys18/Cys27, and Cys21/Cys36. Position 43 is a D-leucine (Leu43). Position 45 (Arg45) is a propeptide, removed by a carboxypeptidase.

It belongs to the conotoxin I1 superfamily. As to expression, expressed by the venom duct.

The protein resides in the secreted. Iota-conotoxins bind to voltage-gated sodium channels (Nav) and act as agonists by shifting the voltage-dependence of activation to more hyperpolarized levels. Produces general excitatory symptoms. The chain is Iota-conotoxin-like R11.10 from Conus radiatus (Rayed cone).